The following is a 114-amino-acid chain: Large ribosomal subunit protein bL20c (114 aa).

The protein belongs to the bacterial ribosomal protein bL20 family.

It is found in the plastid. Its subcellular location is the cyanelle. In terms of biological role, binds directly to 23S ribosomal RNA and is necessary for the in vitro assembly process of the 50S ribosomal subunit. It is not involved in the protein synthesizing functions of that subunit. The polypeptide is Large ribosomal subunit protein bL20c (rpl20) (Cyanophora paradoxa).